The primary structure comprises 91 residues: Acyl carrier protein (91 aa).

The 76-residue stretch at 4–79 (QQILDKVQSI…QAVDYILQHK (76 aa)) folds into the Carrier domain. An O-(pantetheine 4'-phosphoryl)serine modification is found at serine 39.

It belongs to the acyl carrier protein (ACP) family. 4'-phosphopantetheine is transferred from CoA to a specific serine of apo-ACP by AcpS. This modification is essential for activity because fatty acids are bound in thioester linkage to the sulfhydryl of the prosthetic group.

The protein localises to the plastid. Its subcellular location is the chloroplast. The protein operates within lipid metabolism; fatty acid biosynthesis. Its function is as follows. Carrier of the growing fatty acid chain in fatty acid biosynthesis. The sequence is that of Acyl carrier protein from Cyanidioschyzon merolae (strain NIES-3377 / 10D) (Unicellular red alga).